A 601-amino-acid chain; its full sequence is Terpenoid synthase 17 (601 aa).

Residues Asn354, Asp358, Asn497, Thr501, and Glu505 each contribute to the Mg(2+) site. A DDXXD motif; degenerate motif is present at residues 354-358; it reads NDTCD.

The protein belongs to the terpene synthase family. Tpsa subfamily. Mg(2+) serves as cofactor. Requires Mn(2+) as cofactor. In terms of tissue distribution, expressed exclusively in flowers.

The protein localises to the cytoplasm. The protein operates within secondary metabolite biosynthesis; terpenoid biosynthesis. This Arabidopsis thaliana (Mouse-ear cress) protein is Terpenoid synthase 17 (TPS17).